Here is a 172-residue protein sequence, read N- to C-terminus: Large ribosomal subunit protein uL10 (172 aa).

It belongs to the universal ribosomal protein uL10 family. As to quaternary structure, part of the ribosomal stalk of the 50S ribosomal subunit. The N-terminus interacts with L11 and the large rRNA to form the base of the stalk. The C-terminus forms an elongated spine to which L12 dimers bind in a sequential fashion forming a multimeric L10(L12)X complex.

In terms of biological role, forms part of the ribosomal stalk, playing a central role in the interaction of the ribosome with GTP-bound translation factors. This Bartonella henselae (strain ATCC 49882 / DSM 28221 / CCUG 30454 / Houston 1) (Rochalimaea henselae) protein is Large ribosomal subunit protein uL10.